The sequence spans 491 residues: Acetyl-coenzyme A carboxylase carboxyl transferase subunit beta, chloroplastic (491 aa).

The CoA carboxyltransferase N-terminal domain maps to 224-491 (LWIQCENCYG…FFPLNPKKIK (268 aa)). Cys-228, Cys-231, Cys-247, and Cys-250 together coordinate Zn(2+). The C4-type zinc-finger motif lies at 228–250 (CENCYGLNYKKNLKSKINICEQC).

It belongs to the AccD/PCCB family. In terms of assembly, acetyl-CoA carboxylase is a heterohexamer composed of biotin carboxyl carrier protein, biotin carboxylase and 2 subunits each of ACCase subunit alpha and ACCase plastid-coded subunit beta (accD). Requires Zn(2+) as cofactor.

The protein resides in the plastid. It localises to the chloroplast stroma. The enzyme catalyses N(6)-carboxybiotinyl-L-lysyl-[protein] + acetyl-CoA = N(6)-biotinyl-L-lysyl-[protein] + malonyl-CoA. It participates in lipid metabolism; malonyl-CoA biosynthesis; malonyl-CoA from acetyl-CoA: step 1/1. In terms of biological role, component of the acetyl coenzyme A carboxylase (ACC) complex. Biotin carboxylase (BC) catalyzes the carboxylation of biotin on its carrier protein (BCCP) and then the CO(2) group is transferred by the transcarboxylase to acetyl-CoA to form malonyl-CoA. This is Acetyl-coenzyme A carboxylase carboxyl transferase subunit beta, chloroplastic from Vitis vinifera (Grape).